We begin with the raw amino-acid sequence, 273 residues long: Orotidine 5'-phosphate decarboxylase (273 aa).

Lys-96 functions as the Proton donor in the catalytic mechanism.

Belongs to the OMP decarboxylase family. Type 2 subfamily.

It carries out the reaction orotidine 5'-phosphate + H(+) = UMP + CO2. It participates in pyrimidine metabolism; UMP biosynthesis via de novo pathway; UMP from orotate: step 2/2. This Flavobacterium johnsoniae (strain ATCC 17061 / DSM 2064 / JCM 8514 / BCRC 14874 / CCUG 350202 / NBRC 14942 / NCIMB 11054 / UW101) (Cytophaga johnsonae) protein is Orotidine 5'-phosphate decarboxylase.